Reading from the N-terminus, the 257-residue chain is Flavin-dependent thymidylate synthase (257 aa).

The 202-residue stretch at 1-202 (MNVKLVSYTR…PRLFRYVGPN (202 aa)) folds into the ThyX domain. FAD is bound by residues serine 55, 79 to 81 (RHR), and glutamine 87. Residues 76-79 (QLVR), 87-91 (QMSHR), and arginine 141 contribute to the dUMP site. Residues 79-89 (RHRVASYTQMS) carry the ThyX motif motif. FAD is bound by residues 157 to 159 (NAR) and asparagine 163. Arginine 168 is a binding site for dUMP. Catalysis depends on arginine 168, which acts as the Involved in ionization of N3 of dUMP, leading to its activation.

This sequence belongs to the thymidylate synthase ThyX family. As to quaternary structure, homotetramer. Requires FAD as cofactor.

The catalysed reaction is dUMP + (6R)-5,10-methylene-5,6,7,8-tetrahydrofolate + NADPH + H(+) = dTMP + (6S)-5,6,7,8-tetrahydrofolate + NADP(+). It functions in the pathway pyrimidine metabolism; dTTP biosynthesis. Its function is as follows. Catalyzes the reductive methylation of 2'-deoxyuridine-5'-monophosphate (dUMP) to 2'-deoxythymidine-5'-monophosphate (dTMP) while utilizing 5,10-methylenetetrahydrofolate (mTHF) as the methyl donor, and NADPH and FADH(2) as the reductant. This chain is Flavin-dependent thymidylate synthase, found in Sulfurisphaera tokodaii (strain DSM 16993 / JCM 10545 / NBRC 100140 / 7) (Sulfolobus tokodaii).